Reading from the N-terminus, the 580-residue chain is Acyl--CoA ligase GME11374 (580 aa).

It belongs to the ATP-dependent AMP-binding enzyme family.

The protein operates within secondary metabolite biosynthesis. Functionally, acyl--CoA ligase; part of the gene cluster that mediates the biosynthesis of dibenzodioxocinones such as pestalotiollide B, a novel class of inhibitors against cholesterol ester transfer protein (CEPT). The biosynthesis initiates from condensation of acetate and malonate units catalyzed by the non-reducing PKS pks8/GME11356. Pks8/GME11356 lacks a thioesterase (TE) domain, which is important to the cyclizing of the third ring of atrochrysone carboxylic acid, and the esterase GME11355 might play the role of TE and catalyzes the cyclization reaction of the C ring. The lactamase-like protein GME11357 (or other beta-lactamases in Pestalotiopsis microspora) probably hydrolyzes the thioester bond between the ACP of pks8/GME11356 and the intermediate to release atrochrysone carboxylic acid, which is spontaneously dehydrates to form endocrocin anthrone. Endocrocin anthrone is further converted to emodin via the endocrocin intermediate. Emodin is then oxidized by several enzymes such as the Baeyer-Villiger oxidase GME11358, the oxidoreductase GME11367, the short chain dehydrogenase/reductase GME11373, as well as by other oxidoreductases from the cluster, to modify the A and C rings and open the B ring, and finally yield monodictyphenone. The prenyltransferase GME11375 may catalyze the addition reaction between the C5 side chains and the carbon bone of dibenzodioxocinones. The remaining biochemical reactions to the final product dibenzodioxocinones should be methylation catalyzed by methyltransferase GME11366 and reduction and lactonization reaction catalyzed by a series of oxidordeuctases. The sequence is that of Acyl--CoA ligase GME11374 from Pestalotiopsis microspora.